Consider the following 433-residue polypeptide: Trigger factor (433 aa).

One can recognise a PPIase FKBP-type domain in the interval 163–248 (GNFVVIDFVG…VKEAKVKELP (86 aa)).

This sequence belongs to the FKBP-type PPIase family. Tig subfamily.

Its subcellular location is the cytoplasm. It catalyses the reaction [protein]-peptidylproline (omega=180) = [protein]-peptidylproline (omega=0). In terms of biological role, involved in protein export. Acts as a chaperone by maintaining the newly synthesized protein in an open conformation. Functions as a peptidyl-prolyl cis-trans isomerase. The protein is Trigger factor of Geobacter metallireducens (strain ATCC 53774 / DSM 7210 / GS-15).